We begin with the raw amino-acid sequence, 188 residues long: Probable manganese efflux pump MntP (188 aa).

The next 5 helical transmembrane spans lie at 3–23 (ITAT…ASIG), 66–86 (LEWN…RMII), 106–128 (WLLV…GLAF), 143–163 (ATLI…SIIG), and 168–188 (ILGG…HFHG).

This sequence belongs to the MntP (TC 9.B.29) family.

Its subcellular location is the cell inner membrane. Its function is as follows. Probably functions as a manganese efflux pump. The polypeptide is Probable manganese efflux pump MntP (Escherichia coli O7:K1 (strain IAI39 / ExPEC)).